The primary structure comprises 493 residues: Maintenance of mitochondrial morphology protein 1 (493 aa).

Residues 1–23 are Lumenal-facing; that stretch reads MSQHSQYGVPGVPAQSSLSFTQG. The helical transmembrane segment at 24–44 threads the bilayer; it reads FLLGQLSVVLLIGAFIKFFIF. Over 45–493 the chain is Cytoplasmic; it reads GEAPAPPSRG…GSMPRVVRTP (449 aa). The tract at residues 52–104 is disordered; it reads SRGLASRTASHHRSYSINQGDNNANNNTNNGSSPRTLREKPSTSNVLRPVPSS. The span at 69-81 shows a compositional bias: low complexity; that stretch reads NQGDNNANNNTNN. Polar residues predominate over residues 93–104; it reads STSNVLRPVPSS. The SMP-LTD domain maps to 140–391; sequence QPESLDWFNV…EPRVQVVGLP (252 aa). Positions 420–493 are disordered; it reads SSRSGGGPVE…GSMPRVVRTP (74 aa).

It belongs to the MMM1 family. Homodimer. Component of the ER-mitochondria encounter structure (ERMES) or MDM complex, composed of mmm1, mdm10, mdm12 and mdm34. A mmm1 homodimer associates with one molecule of mdm12 on each side in a pairwise head-to-tail manner, and the SMP-LTD domains of mmm1 and mdm12 generate a continuous hydrophobic tunnel for phospholipid trafficking.

It is found in the endoplasmic reticulum membrane. In terms of biological role, component of the ERMES/MDM complex, which serves as a molecular tether to connect the endoplasmic reticulum (ER) and mitochondria. Components of this complex are involved in the control of mitochondrial shape and protein biogenesis, and function in nonvesicular lipid trafficking between the ER and mitochondria. The mdm12-mmm1 subcomplex functions in the major beta-barrel assembly pathway that is responsible for biogenesis of all outer membrane beta-barrel proteins, and acts in a late step after the SAM complex. The mdm10-mdm12-mmm1 subcomplex further acts in the TOM40-specific pathway after the action of the mdm12-mmm1 complex. Essential for establishing and maintaining the structure of mitochondria and maintenance of mtDNA nucleoids. The polypeptide is Maintenance of mitochondrial morphology protein 1 (Talaromyces stipitatus (strain ATCC 10500 / CBS 375.48 / QM 6759 / NRRL 1006) (Penicillium stipitatum)).